A 156-amino-acid chain; its full sequence is Nuclear cap-binding protein subunit 2 (156 aa).

S2 is modified (N-acetylserine). Phosphoserine occurs at positions 13 and 18. Residues Y20, Y43, 112–116 (RTDWD), 123–127 (RQYGR), and 133–134 (QV) each bind mRNA. The region spanning 40–118 (CTLYVGNLSF…RIIRTDWDAG (79 aa)) is the RRM domain. The tract at residues 124–156 (QYGRGRSGGQVRDEYRQDYDAGRGGYGKLAQNQ) is disordered. A compositionally biased stretch (basic and acidic residues) spans 134-144 (VRDEYRQDYDA). At R146 the chain carries Omega-N-methylarginine.

The protein belongs to the RRM NCBP2 family. As to quaternary structure, component of the nuclear cap-binding complex (CBC), a heterodimer composed of NCBP1/CBP80 and NCBP2/CBP20 that interacts with m7GpppG-capped RNA. Found in a U snRNA export complex with PHAX/RNUXA, NCBP1/CBP80, NCBP2/CBP20, RAN, XPO1 and m7G-capped RNA. Interacts with PHAX/RNUXA, EIF4G1, HNRNPF, HNRNPH1 and ALYREF/THOC4/ALY. Interacts with SRRT/ARS2 and KPNA3.

Its subcellular location is the nucleus. The protein localises to the cytoplasm. In terms of biological role, component of the cap-binding complex (CBC), which binds co-transcriptionally to the 5' cap of pre-mRNAs and is involved in various processes such as pre-mRNA splicing, translation regulation, nonsense-mediated mRNA decay, RNA-mediated gene silencing (RNAi) by microRNAs (miRNAs) and mRNA export. The CBC complex is involved in mRNA export from the nucleus via its interaction with ALYREF/THOC4/ALY, leading to the recruitment of the mRNA export machinery to the 5' end of mRNA and to mRNA export in a 5' to 3' direction through the nuclear pore. The CBC complex is also involved in mediating U snRNA and intronless mRNAs export from the nucleus. The CBC complex is essential for a pioneer round of mRNA translation, before steady state translation when the CBC complex is replaced by cytoplasmic cap-binding protein eIF4E. The pioneer round of mRNA translation mediated by the CBC complex plays a central role in nonsense-mediated mRNA decay (NMD), NMD only taking place in mRNAs bound to the CBC complex, but not on eIF4E-bound mRNAs. The CBC complex enhances NMD in mRNAs containing at least one exon-junction complex (EJC) via its interaction with UPF1, promoting the interaction between UPF1 and UPF2. The CBC complex is also involved in 'failsafe' NMD, which is independent of the EJC complex, while it does not participate in Staufen-mediated mRNA decay (SMD). During cell proliferation, the CBC complex is also involved in microRNAs (miRNAs) biogenesis via its interaction with SRRT/ARS2, thereby being required for miRNA-mediated RNA interference. The CBC complex also acts as a negative regulator of PARN, thereby acting as an inhibitor of mRNA deadenylation. In the CBC complex, NCBP2/CBP20 recognizes and binds capped RNAs (m7GpppG-capped RNA) but requires NCBP1/CBP80 to stabilize the movement of its N-terminal loop and lock the CBC into a high affinity cap-binding state with the cap structure. The conventional cap-binding complex with NCBP2 binds both small nuclear RNA (snRNA) and messenger (mRNA) and is involved in their export from the nucleus. The chain is Nuclear cap-binding protein subunit 2 (NCBP2) from Bos taurus (Bovine).